The chain runs to 70 residues: uncharacterized protein (70 aa).

Residues 50–70 (INVVLVLIIALIIFILMLDGV) form a helical membrane-spanning segment.

Its subcellular location is the membrane. This is an uncharacterized protein from Dictyostelium discoideum (Social amoeba).